A 652-amino-acid chain; its full sequence is DNA ligase (652 aa).

Residues 29–33, 78–79, and Glu107 each bind NAD(+); these read DSEYD and SL. The active-site N6-AMP-lysine intermediate is Lys109. NAD(+)-binding residues include Arg130, Glu164, Lys278, and Lys302. Zn(2+) is bound by residues Cys395, Cys398, Cys413, and Cys418. Positions 577–652 constitute a BRCT domain; sequence VADAALSGLT…VRDEAWLESL (76 aa).

Belongs to the NAD-dependent DNA ligase family. LigA subfamily. The cofactor is Mg(2+). Mn(2+) is required as a cofactor.

The enzyme catalyses NAD(+) + (deoxyribonucleotide)n-3'-hydroxyl + 5'-phospho-(deoxyribonucleotide)m = (deoxyribonucleotide)n+m + AMP + beta-nicotinamide D-nucleotide.. In terms of biological role, DNA ligase that catalyzes the formation of phosphodiester linkages between 5'-phosphoryl and 3'-hydroxyl groups in double-stranded DNA using NAD as a coenzyme and as the energy source for the reaction. It is essential for DNA replication and repair of damaged DNA. In Streptococcus pneumoniae serotype 4 (strain ATCC BAA-334 / TIGR4), this protein is DNA ligase.